We begin with the raw amino-acid sequence, 598 residues long: Inactive metallocarboxypeptidase ECM14 (598 aa).

An N-terminal signal peptide occupies residues 1–21 (MRLFTHGQVLALLAFVNTISA). Positions 22–174 (IPSFSTNSYP…QTIYESYPSP (153 aa)) are excised as a propeptide. In terms of domain architecture, Peptidase M14 spans 202–522 (NYQPLSVIVP…NAVMMLGRFL (321 aa)). Zn(2+) is bound by residues histidine 264 and glutamate 267. Substrate-binding positions include 264–267 (HARE), arginine 322, and 339–340 (DR). Cysteine 333 and cysteine 356 are oxidised to a cystine. N-linked (GlcNAc...) asparagine glycosylation occurs at asparagine 349. Histidine 396 contributes to the Zn(2+) binding site. Residue 397-398 (SY) coordinates substrate. Residues 539 to 598 (QRPNKDDKPILNDDDDDDDADTNDDGIGRKDDSWIPDEYKGDNDRDESDGGWAFRRLRKR) form a disordered region. The span at 550–562 (NDDDDDDDADTND) shows a compositional bias: acidic residues. Over residues 564–581 (GIGRKDDSWIPDEYKGDN) the composition is skewed to basic and acidic residues.

Belongs to the peptidase M14 family. Requires Zn(2+) as cofactor.

Its subcellular location is the vacuole. The protein resides in the secreted. Its function is as follows. Inactive carboxypeptidase that may play a role in cell wall organization and biogenesis. This chain is Inactive metallocarboxypeptidase ECM14 (ECM14), found in Ajellomyces capsulatus (strain H143) (Darling's disease fungus).